We begin with the raw amino-acid sequence, 2410 residues long: Reducing polyketide synthase FUB1 (2410 aa).

The span at 1-42 shows a compositional bias: low complexity; the sequence is MTLSNGSNGANGTSNGNGAHPSANGFHNAANGGANNGSANGG. The interval 1 to 52 is disordered; the sequence is MTLSNGSNGANGTSNGNGAHPSANGFHNAANGGANNGSANGGAEHDAGRPQV. A Ketosynthase family 3 (KS3) domain is found at 57–479; the sequence is SSAIAVIGVS…GANAHAVLDD (423 aa). Catalysis depends on for beta-ketoacyl synthase activity residues cysteine 230, histidine 365, and histidine 403. The segment at 608–929 is malonyl-CoA:ACP transacylase (MAT) domain; sequence TFIFTGQGAQ…FSAIKRKQDA (322 aa). Serine 699 functions as the For malonyltransferase activity in the catalytic mechanism. The tract at residues 994–1127 is N-terminal hotdog fold; the sequence is LELLGVRDPR…GLVSTSYKHD (134 aa). The PKS/mFAS DH domain occupies 994–1307; the sequence is LELLGVRDPR…TVPLRGASDS (314 aa). The segment at 995–1302 is dehydratase (DH) domain; the sequence is ELLGVRDPRS…LKGCKTVPLR (308 aa). The Proton acceptor; for dehydratase activity role is filled by histidine 1026. Residues 1155-1307 are C-terminal hotdog fold; that stretch reads LPSVDPTVFY…TVPLRGASDS (153 aa). Catalysis depends on aspartate 1220, which acts as the Proton donor; for dehydratase activity. Residues 1714-2026 are enoyl reductase (ER) domain; sequence GLLDTLEYLS…SGGHVGKIVL (313 aa). The tract at residues 2050–2226 is ketoreductase (KR) domain; that stretch reads ATYVLIGGLG…AATSINLSLV (177 aa). In terms of domain architecture, Carrier spans 2329–2406; sequence EVYEIVLQQL…GFTKKVMAKS (78 aa). The residue at position 2366 (serine 2366) is an O-(pantetheine 4'-phosphoryl)serine.

It functions in the pathway mycotoxin biosynthesis. Reducing polyketide synthase; part of the gene cluster that mediates the biosynthesis of fusaric acid, a mycotoxin with low to moderate toxicity to animals and humans, but with high phytotoxic properties. L-aspartate is suggested as fusaric acid amino acid precursor that is activated and further processed to O-acetyl-L-homoserine by cluster enzymes aspartate kinase FUB3 and homoserine O-acetyltransferase FUB5, as well as enzymes of the primary metabolism. The polyketide synthase (PKS) FUB1 generates the triketide trans-2-hexenal which is presumptively released by the hydrolase FUB4 and linked to the NRPS-bound amino acid precursor by NAD(P)-dependent dehydrogenase FUB6. FUB1, FUB4, and the non-canonical NRPS Fub8 may form an enzyme complex. Further processing of the NRPS-bound intermediate might be carried out by FUB6 and the sulfhydrylase FUB7, enabling a spontaneous electrocyclization to close the carbon backbone of fusaric acid. Dihydrofusaric acid is likely to be released via reduction by the thioester reductase (TR) domain of FUB8 whereupon the final oxidation to fusaric acid may (also) be performed by the FMN-dependent dehydrogenase FUB9. This is Reducing polyketide synthase FUB1 from Gibberella fujikuroi (strain CBS 195.34 / IMI 58289 / NRRL A-6831) (Bakanae and foot rot disease fungus).